Reading from the N-terminus, the 127-residue chain is Large ribosomal subunit protein bL12 (127 aa).

Belongs to the bacterial ribosomal protein bL12 family. As to quaternary structure, homodimer. Part of the ribosomal stalk of the 50S ribosomal subunit. Forms a multimeric L10(L12)X complex, where L10 forms an elongated spine to which 2 to 4 L12 dimers bind in a sequential fashion. Binds GTP-bound translation factors.

In terms of biological role, forms part of the ribosomal stalk which helps the ribosome interact with GTP-bound translation factors. Is thus essential for accurate translation. In Nitratiruptor sp. (strain SB155-2), this protein is Large ribosomal subunit protein bL12.